Reading from the N-terminus, the 583-residue chain is Arginine--tRNA ligase (583 aa).

A 'HIGH' region motif is present at residues 121–131 (ANPTGPLHLGH).

Belongs to the class-I aminoacyl-tRNA synthetase family. Monomer.

It localises to the cytoplasm. The catalysed reaction is tRNA(Arg) + L-arginine + ATP = L-arginyl-tRNA(Arg) + AMP + diphosphate. The sequence is that of Arginine--tRNA ligase (argS) from Aquifex aeolicus (strain VF5).